Reading from the N-terminus, the 455-residue chain is 12S seed storage protein CRB (455 aa).

The N-terminal stretch at Met-1–Gln-24 is a signal peptide. Cystine bridges form between Cys-30/Cys-63 and Cys-106/Cys-276. 2 Cupin type-1 domains span residues Leu-35–Gln-229 and Glu-282–Lys-431. Phosphothreonine is present on Thr-109. Tyr-299 carries the post-translational modification Phosphotyrosine. Phosphoserine occurs at positions 301 and 367. 2 positions are modified to phosphothreonine: Thr-395 and Thr-420. Residue Ser-436 is modified to Phosphoserine.

The protein belongs to the 11S seed storage protein (globulins) family. Hexamer; each subunit is composed of an acidic and a basic chain derived from a single precursor and linked by a disulfide bond. In terms of processing, ubiquitinated. Post-translationally, proteolytically processed during seed maturation at a conserved Asn-Gly peptide bond by an asparaginyl endopeptidase to produce two mature polypeptides referred to as alpha and beta subunits that are joined together by a disulfide bond. Phosphorylated in seeds on some Tyr residues in response to abscisic acid (ABA). In terms of tissue distribution, accumulates in seeds 8 days after anthesis.

The protein resides in the protein storage vacuole. Its function is as follows. Seed storage protein. The chain is 12S seed storage protein CRB (CRB) from Arabidopsis thaliana (Mouse-ear cress).